We begin with the raw amino-acid sequence, 53 residues long: RYIPYDQEDVKRQMVAAIGIEDKNTVTRANYYTLDLXIDTVTPDVNRNELKEK.

It belongs to the venom metalloproteinase (M12B) family. P-III subfamily. P-IIIb sub-subfamily. As to quaternary structure, monomer. The cofactor is Zn(2+). Contains numerous disulfide bonds. Post-translationally, glycosylated. As to expression, expressed by the venom gland.

The protein localises to the secreted. Its activity is regulated as follows. Alborhagin-induced platelet aggregation, but not shape change, is inhibited by EDTA, suggesting that the platelet activation (shape change) is independent of divalent cation or metalloproteinase activity. Functionally, induces platelet activation and glycoprotein VI (GP6)-dependent platelet aggregation. Induces ectodomain cleavage of GP6 by activating endogenous platelet metalloproteinases (probably ADAM10). Has fibrinogenolytic activity against the alpha chain of fibrinogen (FGA). Recognizes distinct binding sites as convulxin, since alborhagin has minimal effect on convulxin binding to GPVI-expressing cells. In terms of biological role, disintegrin alborhagin-C: 42 kDa fragment of alborhagin autoproteolysed that does not show platelet activation. The chain is Zinc metalloproteinase-disintegrin-like alborhagin from Trimeresurus albolabris (White-lipped pit viper).